A 447-amino-acid chain; its full sequence is Signal recognition particle 54 kDa protein (447 aa).

GTP-binding positions include 103–110, 185–189, and 245–248; these read GVQGSGKT, DTAGR, and TKMD.

Belongs to the GTP-binding SRP family. SRP54 subfamily. In terms of assembly, part of the signal recognition particle protein translocation system, which is composed of SRP and FtsY. Archaeal SRP consists of a 7S RNA molecule of 300 nucleotides and two protein subunits: SRP54 and SRP19.

It localises to the cytoplasm. The catalysed reaction is GTP + H2O = GDP + phosphate + H(+). Functionally, involved in targeting and insertion of nascent membrane proteins into the cytoplasmic membrane. Binds to the hydrophobic signal sequence of the ribosome-nascent chain (RNC) as it emerges from the ribosomes. The SRP-RNC complex is then targeted to the cytoplasmic membrane where it interacts with the SRP receptor FtsY. This is Signal recognition particle 54 kDa protein from Saccharolobus islandicus (strain Y.N.15.51 / Yellowstone #2) (Sulfolobus islandicus).